We begin with the raw amino-acid sequence, 99 residues long: Small ribosomal subunit protein eS24 (99 aa).

This sequence belongs to the eukaryotic ribosomal protein eS24 family. May be present in 2 copies per 70S ribosome. Part of the 30S ribosomal subunit, where it binds 16S rRNA at its canonical site at the bse of the body, as well as a possible second 50S binding site near 23S rRNA helix 45.

The protein is Small ribosomal subunit protein eS24 of Pyrococcus furiosus (strain ATCC 43587 / DSM 3638 / JCM 8422 / Vc1).